We begin with the raw amino-acid sequence, 393 residues long: tRNA(Met) cytidine acetate ligase (393 aa).

Residues Gly81, Asn142, and Arg167 each contribute to the ATP site.

It belongs to the TmcAL family.

It localises to the cytoplasm. It carries out the reaction cytidine(34) in elongator tRNA(Met) + acetate + ATP = N(4)-acetylcytidine(34) in elongator tRNA(Met) + AMP + diphosphate. Its function is as follows. Catalyzes the formation of N(4)-acetylcytidine (ac(4)C) at the wobble position of elongator tRNA(Met), using acetate and ATP as substrates. First activates an acetate ion to form acetyladenylate (Ac-AMP) and then transfers the acetyl group to tRNA to form ac(4)C34. In Bacillus cereus (strain 03BB102), this protein is tRNA(Met) cytidine acetate ligase.